The sequence spans 80 residues: RNA-binding protein Hfq (80 aa).

Residues 10–70 (DAFLNQVRKE…ISTISPLRPV (61 aa)) form the Sm domain.

It belongs to the Hfq family. As to quaternary structure, homohexamer.

Its function is as follows. RNA chaperone that binds small regulatory RNA (sRNAs) and mRNAs to facilitate mRNA translational regulation in response to envelope stress, environmental stress and changes in metabolite concentrations. Also binds with high specificity to tRNAs. The protein is RNA-binding protein Hfq of Desulforamulus reducens (strain ATCC BAA-1160 / DSM 100696 / MI-1) (Desulfotomaculum reducens).